Consider the following 280-residue polypeptide: Golgi phosphoprotein 3-like A (280 aa).

The tract at residues 1 to 32 (MTTLIRRGRRAEEGQERRADSEDSIKDKDEEE) is disordered. The segment covering 10 to 32 (RAEEGQERRADSEDSIKDKDEEE) has biased composition (basic and acidic residues). A 1,2-diacyl-sn-glycero-3-phospho-(1D-myo-inositol 4-phosphate)-binding residues include Trp62, Arg71, Arg152, and Arg155. The beta-hairpin required for oligomerization stretch occupies residues 171-182 (EKQNFLLFDMTT).

It belongs to the GOLPH3/VPS74 family. In terms of assembly, homooligomer.

It is found in the golgi apparatus. The protein resides in the golgi stack membrane. Its subcellular location is the trans-Golgi network membrane. In terms of biological role, phosphatidylinositol-4-phosphate-binding protein that may play a role in the process of vesicle budding at the Golgi and anterograde transport to the plasma membrane. In Xenopus laevis (African clawed frog), this protein is Golgi phosphoprotein 3-like A (golph3l-a).